We begin with the raw amino-acid sequence, 250 residues long: UDP-2,3-diacylglucosamine hydrolase (250 aa).

Mn(2+) contacts are provided by D8, H10, D41, N79, and H114. 79-80 (NR) lines the substrate pocket. Residues D122, S160, D172, Q175, and H203 each coordinate substrate. Residues H203 and H205 each coordinate Mn(2+).

It belongs to the LpxH family. The cofactor is Mn(2+).

It localises to the cell inner membrane. It catalyses the reaction UDP-2-N,3-O-bis[(3R)-3-hydroxytetradecanoyl]-alpha-D-glucosamine + H2O = 2-N,3-O-bis[(3R)-3-hydroxytetradecanoyl]-alpha-D-glucosaminyl 1-phosphate + UMP + 2 H(+). It functions in the pathway glycolipid biosynthesis; lipid IV(A) biosynthesis; lipid IV(A) from (3R)-3-hydroxytetradecanoyl-[acyl-carrier-protein] and UDP-N-acetyl-alpha-D-glucosamine: step 4/6. Functionally, hydrolyzes the pyrophosphate bond of UDP-2,3-diacylglucosamine to yield 2,3-diacylglucosamine 1-phosphate (lipid X) and UMP by catalyzing the attack of water at the alpha-P atom. Involved in the biosynthesis of lipid A, a phosphorylated glycolipid that anchors the lipopolysaccharide to the outer membrane of the cell. This Xylella fastidiosa (strain M12) protein is UDP-2,3-diacylglucosamine hydrolase.